We begin with the raw amino-acid sequence, 243 residues long: Small ribosomal subunit protein uS3 (243 aa).

The KH type-2 domain maps to 39–110; it reads IRTFIQKKYG…QVRINVVEVE (72 aa). Positions 216 to 243 are disordered; it reads KTIPVGASPKRKAGRRPQQFEDRSNENS. Over residues 233-243 the composition is skewed to basic and acidic residues; that stretch reads QQFEDRSNENS.

Belongs to the universal ribosomal protein uS3 family. In terms of assembly, part of the 30S ribosomal subunit. Forms a tight complex with proteins S10 and S14.

Its function is as follows. Binds the lower part of the 30S subunit head. Binds mRNA in the 70S ribosome, positioning it for translation. This Prochlorococcus marinus (strain MIT 9312) protein is Small ribosomal subunit protein uS3.